The primary structure comprises 1100 residues: Serine/threonine/tyrosine-interacting-like protein 2 (1100 aa).

A compositionally biased stretch (polar residues) spans 1–12; it reads MASSVEDQQLQQ. The segment at 1 to 21 is disordered; the sequence is MASSVEDQQLQQEEAESVKDV. The 149-residue stretch at 141–289 folds into the Tyrosine-protein phosphatase domain; the sequence is SPVDEVWPNV…LRQLNETLME (149 aa). Residues 356 to 374 are compositionally biased toward polar residues; it reads CGSQQPNMQQPADQPSLPG. Disordered regions lie at residues 356 to 383, 411 to 436, 479 to 504, 542 to 561, 575 to 615, 667 to 686, 888 to 1060, and 1075 to 1100; these read CGSQ…EDGD, EDED…TSED, AAAR…DDVQ, KENA…APDL, KQQK…ERSR, VLSG…TPAP, CEKP…DEEI, and VAEE…HDHK. The span at 418-428 shows a compositional bias: basic and acidic residues; the sequence is DKTQRAVRPDD. The span at 580-615 shows a compositional bias: basic and acidic residues; it reads HGGEENKEEILQMSRGEDTATARRRQRREEVLERSR. Over residues 667–676 the composition is skewed to low complexity; the sequence is VLSGRSTRSL. Residues 888–898 show a composition bias toward basic and acidic residues; the sequence is CEKPKPKRDYG. Composition is skewed to polar residues over residues 907 to 916, 994 to 1013, and 1029 to 1041; these read ASANNPTSSI, SYSS…TSFA, and FQNH…SSVY. A compositionally biased stretch (basic and acidic residues) spans 1089 to 1100; sequence RKQEESKSHDHK.

Belongs to the protein-tyrosine phosphatase family. Non-receptor class dual specificity subfamily. In terms of tissue distribution, expressed in muscle fibers in a regular striated pattern (at protein level).

Its subcellular location is the cytoplasm. The protein resides in the myofibril. The protein localises to the sarcomere. Required for myofiber maturation. The protein is Serine/threonine/tyrosine-interacting-like protein 2 (styxl2) of Danio rerio (Zebrafish).